A 231-amino-acid chain; its full sequence is 5'-methylthioadenosine/S-adenosylhomocysteine nucleosidase (231 aa).

E12 (proton acceptor) is an active-site residue. Substrate contacts are provided by residues G78, I153, and 174–175 (ME). The Proton donor role is filled by D198.

It belongs to the PNP/UDP phosphorylase family. MtnN subfamily.

It catalyses the reaction S-adenosyl-L-homocysteine + H2O = S-(5-deoxy-D-ribos-5-yl)-L-homocysteine + adenine. The enzyme catalyses S-methyl-5'-thioadenosine + H2O = 5-(methylsulfanyl)-D-ribose + adenine. The catalysed reaction is 5'-deoxyadenosine + H2O = 5-deoxy-D-ribose + adenine. It participates in amino-acid biosynthesis; L-methionine biosynthesis via salvage pathway; S-methyl-5-thio-alpha-D-ribose 1-phosphate from S-methyl-5'-thioadenosine (hydrolase route): step 1/2. Catalyzes the irreversible cleavage of the glycosidic bond in both 5'-methylthioadenosine (MTA) and S-adenosylhomocysteine (SAH/AdoHcy) to adenine and the corresponding thioribose, 5'-methylthioribose and S-ribosylhomocysteine, respectively. Also cleaves 5'-deoxyadenosine, a toxic by-product of radical S-adenosylmethionine (SAM) enzymes, into 5-deoxyribose and adenine. The protein is 5'-methylthioadenosine/S-adenosylhomocysteine nucleosidase of Shewanella sp. (strain W3-18-1).